The sequence spans 119 residues: Beta-2-microglobulin (119 aa).

The signal sequence occupies residues 1–20; that stretch reads MARSVVVALLVLLSLSGLEA. The 90-residue stretch at 25-114 folds into the Ig-like C1-type domain; sequence PKIQVYSRHP…VTFPTPKTVK (90 aa). A disulfide bond links Cys-45 and Cys-100.

This sequence belongs to the beta-2-microglobulin family. In terms of assembly, heterodimer of an alpha chain and a beta chain. Beta-2-microglobulin is the beta-chain of major histocompatibility complex class I molecules.

It is found in the secreted. Functionally, component of the class I major histocompatibility complex (MHC). Involved in the presentation of peptide antigens to the immune system. The protein is Beta-2-microglobulin (B2M) of Lagothrix lagotricha (Brown woolly monkey).